A 287-amino-acid chain; its full sequence is Bifunctional protein FolD (287 aa).

NADP(+) is bound by residues 166–168 (GAS), serine 191, and isoleucine 232.

The protein belongs to the tetrahydrofolate dehydrogenase/cyclohydrolase family. In terms of assembly, homodimer.

The catalysed reaction is (6R)-5,10-methylene-5,6,7,8-tetrahydrofolate + NADP(+) = (6R)-5,10-methenyltetrahydrofolate + NADPH. It carries out the reaction (6R)-5,10-methenyltetrahydrofolate + H2O = (6R)-10-formyltetrahydrofolate + H(+). Its pathway is one-carbon metabolism; tetrahydrofolate interconversion. Catalyzes the oxidation of 5,10-methylenetetrahydrofolate to 5,10-methenyltetrahydrofolate and then the hydrolysis of 5,10-methenyltetrahydrofolate to 10-formyltetrahydrofolate. The chain is Bifunctional protein FolD from Haemophilus ducreyi (strain 35000HP / ATCC 700724).